A 234-amino-acid chain; its full sequence is uncharacterized protein (234 aa).

Residues 1-23 (MVDQIRSPSWKSGFPSHQHQQGS) form a disordered region.

This is an uncharacterized protein from Caenorhabditis elegans.